The sequence spans 465 residues: Cytochrome c peroxidase Ccp (465 aa).

The Cytoplasmic portion of the chain corresponds to 1–6 (MKMVSR). The chain crosses the membrane as a helical span at residues 7–27 (ITAIGLAGVAICYLGLSGYVW). Residues 28-465 (YHDNKRSKQA…VYTPYMQDKQ (438 aa)) are Periplasmic-facing. 3 consecutive Cytochrome c domains span residues 42-155 (SAVS…AKQR), 185-287 (QKVA…EKDP), and 337-454 (AQQK…HSLN). Heme c is bound by residues Cys59, Cys62, His63, Met125, Cys207, Cys210, His211, Cys351, Cys354, His355, and Met429.

As to quaternary structure, the recombinant enzyme lacking its transmembrane domain is a monomer in solution. Heme c serves as cofactor.

The protein resides in the cell inner membrane. Does not require reductive activation for maximum activity, as peroxidatic heme is high-spin His/OH(-) 6-coordinated. Calcium ions are needed to attain maximum peroxidase activity. Its function is as follows. Cytochrome peroxidase that enables anaerobic respiration with H(2)O(2) as a terminal electron acceptor. It receives electrons from the quinol pool. Menaquinol is probably the electron donor in vivo. It can use menadiol (a menaquinol analog), hydroquinone, duroquinol and the artificial electron donor ABTS(2-) in vitro, but only menadiol and hydroquinone can efficiently transfer electrons to Ccp, maintaining the catalytic activity of the enzyme. It enables E.coli to grow on a nonfermentable carbon source when H(2)O(2) is supplied. Plays a role in the peroxide stress response under anaerobic conditions. However, it does not degrade H(2)O(2) quickly enough to lower the periplasmic H(2)O(2) level below that of the surrounding medium and protect the cell from its toxic effects. This Escherichia coli (strain K12) protein is Cytochrome c peroxidase Ccp.